Here is a 468-residue protein sequence, read N- to C-terminus: Aldehyde dehydrogenase family 3 member B1 (468 aa).

An N-acetylmethionine modification is found at Met-1. 188–193 lines the NAD(+) pocket; the sequence is GNAYVG. Catalysis depends on residues Glu-210 and Cys-244. S-palmitoyl cysteine attachment occurs at residues Cys-462 and Cys-463. Cys-465 carries the cysteine methyl ester modification. Cys-465 carries S-geranylgeranyl cysteine lipidation. Residues 466–468 constitute a propeptide, removed in mature form; the sequence is TLL.

Belongs to the aldehyde dehydrogenase family. Dually lipidated in the C-terminus; prenylation occurs prior to, and is a prerequisite for palmitoylation. It is also required for activity towards long-chain substrates. In terms of tissue distribution, highly expressed in kidney and liver. In brain is expressed at moderate levels in cortex, striatum and hippocampus, and at lower levels in brainstem and cerebellum.

The protein localises to the cell membrane. It carries out the reaction an aldehyde + NAD(+) + H2O = a carboxylate + NADH + 2 H(+). The catalysed reaction is a long-chain fatty aldehyde + NAD(+) + H2O = a long-chain fatty acid + NADH + 2 H(+). The enzyme catalyses a medium-chain fatty aldehyde + NAD(+) + H2O = a medium-chain fatty acid + NADH + 2 H(+). It catalyses the reaction octanal + NAD(+) + H2O = octanoate + NADH + 2 H(+). It carries out the reaction nonanal + NAD(+) + H2O = nonanoate + NADH + 2 H(+). The catalysed reaction is hexadecanoate + NADH + 2 H(+) = hexadecanal + NAD(+) + H2O. The enzyme catalyses (2E)-octenal + NAD(+) + H2O = (2E)-octenoate + NADH + 2 H(+). It catalyses the reaction (E)-non-2-enal + NAD(+) + H2O = (E)-non-2-enoate + NADH + 2 H(+). It carries out the reaction (E)-4-hydroxynon-2-enal + NAD(+) + H2O = (E)-4-hydroxynon-2-enoate + NADH + 2 H(+). The catalysed reaction is (2E)-hexadecenal + NAD(+) + H2O = (E)-hexadec-2-enoate + NADH + 2 H(+). The enzyme catalyses benzaldehyde + NAD(+) + H2O = benzoate + NADH + 2 H(+). It catalyses the reaction an aldehyde + NADP(+) + H2O = a carboxylate + NADPH + 2 H(+). It carries out the reaction a medium-chain fatty aldehyde + NADP(+) + H2O = a medium-chain fatty acid + NADPH + 2 H(+). The catalysed reaction is hexanal + NADP(+) + H2O = hexanoate + NADPH + 2 H(+). The enzyme catalyses octanal + NADP(+) + H2O = octanoate + NADPH + 2 H(+). It catalyses the reaction nonanal + NADP(+) + H2O = nonanoate + NADPH + 2 H(+). It carries out the reaction (2E)-octenal + NADP(+) + H2O = (2E)-octenoate + NADPH + 2 H(+). The catalysed reaction is (E)-non-2-enal + NADP(+) + H2O = (E)-non-2-enoate + NADPH + 2 H(+). The enzyme catalyses (E)-4-hydroxynon-2-enal + NADP(+) + H2O = (E)-4-hydroxynon-2-enoate + NADPH + 2 H(+). It catalyses the reaction benzaldehyde + NADP(+) + H2O = benzoate + NADPH + 2 H(+). Its pathway is alcohol metabolism; ethanol degradation; acetate from ethanol: step 2/2. Oxidizes medium and long chain saturated and unsaturated fatty aldehydes generated in the plasma membrane into non-toxic fatty acids. May have a protective role against the cytotoxicity induced by lipid peroxidation. Short-chain fatty aldehydes are not good substrates. Can use both NADP(+) and NAD(+) as electron acceptor in vitro, however in vivo preference will depend on their tissue levels. Low activity towards acetaldehyde and 3,4-dihydroxyphenylacetaldehyde. Able to metabolize aromatic aldehydes such as benzaldehyde to their acid form. The polypeptide is Aldehyde dehydrogenase family 3 member B1 (Aldh3b1) (Mus musculus (Mouse)).